The sequence spans 263 residues: Hydroxyethylthiazole kinase 1 (263 aa).

Methionine 42 serves as a coordination point for substrate. Lysine 118 and threonine 164 together coordinate ATP. Glycine 191 serves as a coordination point for substrate.

This sequence belongs to the Thz kinase family. The cofactor is Mg(2+).

It carries out the reaction 5-(2-hydroxyethyl)-4-methylthiazole + ATP = 4-methyl-5-(2-phosphooxyethyl)-thiazole + ADP + H(+). It participates in cofactor biosynthesis; thiamine diphosphate biosynthesis; 4-methyl-5-(2-phosphoethyl)-thiazole from 5-(2-hydroxyethyl)-4-methylthiazole: step 1/1. Functionally, catalyzes the phosphorylation of the hydroxyl group of 4-methyl-5-beta-hydroxyethylthiazole (THZ). The sequence is that of Hydroxyethylthiazole kinase 1 from Clostridium botulinum (strain Langeland / NCTC 10281 / Type F).